The primary structure comprises 440 residues: Xylose isomerase (440 aa).

Residues His101 and Asp104 contribute to the active site. Glu232, Glu268, His271, Asp296, Asp307, Asp309, and Asp339 together coordinate Mg(2+).

Belongs to the xylose isomerase family. As to quaternary structure, homotetramer. Requires Mg(2+) as cofactor.

The protein localises to the cytoplasm. The catalysed reaction is alpha-D-xylose = alpha-D-xylulofuranose. The sequence is that of Xylose isomerase from Salmonella paratyphi B (strain ATCC BAA-1250 / SPB7).